The following is a 262-amino-acid chain: Phosphonates import ATP-binding protein PhnC (262 aa).

One can recognise an ABC transporter domain in the interval 5 to 253; that stretch reads IRVEKLAKTF…RFDHLYRSIN (249 aa). ATP is bound at residue 37–44; that stretch reads GPSGSGKS.

It belongs to the ABC transporter superfamily. Phosphonates importer (TC 3.A.1.9.1) family. The complex is composed of two ATP-binding proteins (PhnC), two transmembrane proteins (PhnE) and a solute-binding protein (PhnD).

It localises to the cell inner membrane. It catalyses the reaction phosphonate(out) + ATP + H2O = phosphonate(in) + ADP + phosphate + H(+). Part of the ABC transporter complex PhnCDE involved in phosphonates import. Responsible for energy coupling to the transport system. The sequence is that of Phosphonates import ATP-binding protein PhnC from Escherichia coli O6:K15:H31 (strain 536 / UPEC).